We begin with the raw amino-acid sequence, 184 residues long: Fungal defensin copsin (184 aa).

The first 23 residues, 1–23 (MKLSTSLLAIVAVASTFIGNALS), serve as a signal peptide directing secretion. Residues 24 to 127 (ATTVPGCFAE…LGRVLPVEKR (104 aa)) constitute a propeptide that is removed on maturation. Residue glutamine 128 is modified to Pyrrolidone carboxylic acid. 6 disulfides stabilise this stretch: cysteine 130–cysteine 159, cysteine 137–cysteine 167, cysteine 145–cysteine 175, cysteine 149–cysteine 177, cysteine 152–cysteine 184, and cysteine 162–cysteine 181.

This sequence belongs to the invertebrate defensin family. Post-translationally, contains a unique connectivity of 6 cysteine bonds in contrast to most other CS-alpha-beta defensins which are linked by 3 or 4 disulfide bonds. Disulfide bonds are essential for structural integrity and antibacterial activity, since activity is lost after treatment with reducing agents. Thanks to disulfide bonds and N-terminal pyroglutamate, the protein is extremely stable in a wide pH and temperature range and insensitive toward proteases.

It localises to the secreted. The protein resides in the target cell membrane. Functionally, antimicrobial peptide that acts against Gram-positive bacteria (Listeria spp., Enterococcus spp., B.subtilis, B.anthracis, P.aeruginosa). Is not active against Gram-negative bacteria. It selectively inhibits peptidoglycan biosynthesis through complex formation with the cell wall precursor lipid II (1:1 molar ratio), probably anchoring lipid II to the membrane, thus inhibiting cell wall synthesis. The interaction with lipid II involves the third position of the pentapeptide. Shows bactericidal activity at about 2-fold minimal inhibitory concentrations (MIC), but does not form pore across the membrane. In Coprinopsis cinerea (Inky cap fungus), this protein is Fungal defensin copsin.